A 246-amino-acid chain; its full sequence is UDP-2,3-diacylglucosamine hydrolase (246 aa).

Residues aspartate 8, histidine 10, aspartate 41, asparagine 79, and histidine 114 each contribute to the Mn(2+) site. 79–80 (NR) provides a ligand contact to substrate. Substrate contacts are provided by aspartate 122, lysine 164, lysine 167, and histidine 195. Mn(2+) contacts are provided by histidine 195 and histidine 197.

It belongs to the LpxH family. Requires Mn(2+) as cofactor.

Its subcellular location is the cell inner membrane. The catalysed reaction is UDP-2-N,3-O-bis[(3R)-3-hydroxytetradecanoyl]-alpha-D-glucosamine + H2O = 2-N,3-O-bis[(3R)-3-hydroxytetradecanoyl]-alpha-D-glucosaminyl 1-phosphate + UMP + 2 H(+). The protein operates within glycolipid biosynthesis; lipid IV(A) biosynthesis; lipid IV(A) from (3R)-3-hydroxytetradecanoyl-[acyl-carrier-protein] and UDP-N-acetyl-alpha-D-glucosamine: step 4/6. In terms of biological role, hydrolyzes the pyrophosphate bond of UDP-2,3-diacylglucosamine to yield 2,3-diacylglucosamine 1-phosphate (lipid X) and UMP by catalyzing the attack of water at the alpha-P atom. Involved in the biosynthesis of lipid A, a phosphorylated glycolipid that anchors the lipopolysaccharide to the outer membrane of the cell. This chain is UDP-2,3-diacylglucosamine hydrolase, found in Vibrio cholerae serotype O1 (strain ATCC 39541 / Classical Ogawa 395 / O395).